The following is a 636-amino-acid chain: Leucine-rich repeat and fibronectin type-III domain-containing protein 4 (636 aa).

The first 16 residues, 1 to 16 (MAPPLLLLLLASGAAA), serve as a signal peptide directing secretion. An LRRNT domain is found at 17–48 (CPLPCVCQNLSESLSTLCAHRGLLFVPPNVDR). At 17–518 (CPLPCVCQNL…LQAHVLGGTL (502 aa)) the chain is on the extracellular side. A glycan (N-linked (GlcNAc...) asparagine) is linked at N25. 7 LRR repeats span residues 49 to 70 (RTVE…DFRN), 73 to 94 (GLVD…SFGD), 97 to 118 (SLRS…SLRG), 121 to 142 (NLQH…AFDD), 146 to 169 (SLED…GSMP), 170 to 191 (ALHT…VFAQ), and 194 to 215 (QLSR…PLFS). Residues 234 to 280 (NPLHCNCELLWLRRLARPDDLETCASPPTLAGRYFWAVPEGEFSCEP) enclose the LRRCT domain. The 87-residue stretch at 281-367 (PLIARHTQRL…GEATARVELR (87 aa)) folds into the Ig-like domain. Cysteines 302 and 351 form a disulfide. A glycan (N-linked (GlcNAc...) asparagine) is linked at N333. The 98-residue stretch at 405-502 (SEPAVQVTEV…GCAHFSTLPA (98 aa)) folds into the Fibronectin type-III domain. The chain crosses the membrane as a helical span at residues 519 to 539 (TVAVGGVLVAALLVFTVALLV). The Cytoplasmic portion of the chain corresponds to 540–636 (RGRGAGNGRL…SAERLEESVV (97 aa)). The interval 556–585 (VQSQTNGGTSPMPKSHPPRSPPPRPQRSCS) is disordered. A compositionally biased stretch (pro residues) spans 569 to 580 (KSHPPRSPPPRP). 2 positions are modified to phosphoserine: S585 and S627. A PDZ-binding motif is present at residues 633–636 (ESVV).

This sequence belongs to the LRFN family. In terms of assembly, forms heteromeric complexes with LRFN1 and LRFN2. Can form heteromeric complexes with LRFN3 and LRFN5. Unable to form homophilic interactions across cell junctions. Interacts with DLG1, DLG2, DLG3 and DLG4. In terms of processing, glycosylated.

It is found in the membrane. In terms of biological role, promotes neurite outgrowth in hippocampal neurons. May play a role in redistributing DLG4 to the cell periphery. This is Leucine-rich repeat and fibronectin type-III domain-containing protein 4 (Lrfn4) from Rattus norvegicus (Rat).